Here is a 123-residue protein sequence, read N- to C-terminus: Alpha-lactalbumin (123 aa).

The 123-residue stretch at 1 to 123 (KQFTKCELSQ…KLEQWLCEEL (123 aa)) folds into the C-type lysozyme domain. Disulfide bonds link Cys-6–Cys-120, Cys-28–Cys-111, Cys-61–Cys-77, and Cys-73–Cys-91. Residues Lys-79, Asp-82, Asp-84, Asp-87, and Asp-88 each contribute to the Ca(2+) site.

The protein belongs to the glycosyl hydrolase 22 family. In terms of assembly, lactose synthase (LS) is a heterodimer of a catalytic component, beta1,4-galactosyltransferase (beta4Gal-T1) and a regulatory component, alpha-lactalbumin (LA). Mammary gland specific. Secreted in milk.

The protein resides in the secreted. Regulatory subunit of lactose synthase, changes the substrate specificity of galactosyltransferase in the mammary gland making glucose a good acceptor substrate for this enzyme. This enables LS to synthesize lactose, the major carbohydrate component of milk. In other tissues, galactosyltransferase transfers galactose onto the N-acetylglucosamine of the oligosaccharide chains in glycoproteins. The chain is Alpha-lactalbumin (LALBA) from Equus asinus (Donkey).